The primary structure comprises 413 residues: NAD-dependent dihydropyrimidine dehydrogenase subunit PreT homolog (413 aa).

NAD(+) is bound at residue Glu-287.

This sequence belongs to the NADH dehydrogenase family. In terms of assembly, heterotetramer of 2 PreA and 2 PreT subunits.

It catalyses the reaction 5,6-dihydrouracil + NAD(+) = uracil + NADH + H(+). The catalysed reaction is 5,6-dihydrothymine + NAD(+) = thymine + NADH + H(+). Its function is as follows. Involved in pyrimidine base degradation. Catalyzes physiologically the reduction of uracil to 5,6-dihydrouracil (DHU) by using NADH as a specific cosubstrate. It also catalyzes the reverse reaction and the reduction of thymine to 5,6-dihydrothymine (DHT). The chain is NAD-dependent dihydropyrimidine dehydrogenase subunit PreT homolog (preT) from Salmonella typhi.